The sequence spans 127 residues: Glycine cleavage system H protein (127 aa).

The Lipoyl-binding domain maps to 22-104 (AVVIGITHFA…YEGAWMVKVE (83 aa)). Residue K63 is modified to N6-lipoyllysine.

The protein belongs to the GcvH family. In terms of assembly, the glycine cleavage system is composed of four proteins: P, T, L and H. (R)-lipoate is required as a cofactor.

The glycine cleavage system catalyzes the degradation of glycine. The H protein shuttles the methylamine group of glycine from the P protein to the T protein. Functionally, is also involved in protein lipoylation via its role as an octanoyl/lipoyl carrier protein intermediate. In Bacillus mycoides (strain KBAB4) (Bacillus weihenstephanensis), this protein is Glycine cleavage system H protein.